The following is a 468-amino-acid chain: Putative magnesium transporter MRS2-G (468 aa).

Disordered stretches follow at residues 1–76 (MGRR…AGKV) and 182–205 (NGQPGGDDHGEKHDDSPGDQVPRL). 2 stretches are compositionally biased toward low complexity: residues 14 to 23 (ASNASTSSST) and 31 to 45 (RLPSLTRPRASSSPS). The segment covering 46 to 67 (PASPSPPPPSASHPAPPSPPLA) has biased composition (pro residues). Basic and acidic residues predominate over residues 187–197 (GDDHGEKHDDS). Helical transmembrane passes span 402–422 (LTLTIASFGIAVNTFIAGAFA) and 437–457 (FFWPFVGGTSSGCFMICIVLL).

Belongs to the CorA metal ion transporter (MIT) (TC 1.A.35.5) family.

The protein resides in the membrane. Putative magnesium transporter. The protein is Putative magnesium transporter MRS2-G (MRS2-G) of Oryza sativa subsp. indica (Rice).